The sequence spans 494 residues: Glycerol kinase (494 aa).

Thr13 serves as a coordination point for ADP. Thr13, Thr14, and Ser15 together coordinate ATP. Thr13 lines the sn-glycerol 3-phosphate pocket. Arg17 contributes to the ADP binding site. Positions 83, 84, 135, and 244 each coordinate sn-glycerol 3-phosphate. 5 residues coordinate glycerol: Arg83, Glu84, Tyr135, Asp244, and Gln245. Thr266 and Gly309 together coordinate ADP. 4 residues coordinate ATP: Thr266, Gly309, Gln313, and Gly410. ADP-binding residues include Gly410 and Asn414.

The protein belongs to the FGGY kinase family.

The catalysed reaction is glycerol + ATP = sn-glycerol 3-phosphate + ADP + H(+). The protein operates within polyol metabolism; glycerol degradation via glycerol kinase pathway; sn-glycerol 3-phosphate from glycerol: step 1/1. With respect to regulation, inhibited by fructose 1,6-bisphosphate (FBP). Key enzyme in the regulation of glycerol uptake and metabolism. Catalyzes the phosphorylation of glycerol to yield sn-glycerol 3-phosphate. This is Glycerol kinase from Shewanella baltica (strain OS185).